A 401-amino-acid polypeptide reads, in one-letter code: Argininosuccinate synthase (401 aa).

ATP-binding positions include 9-17 and Ala35; that span reads AFSGGLDTS. L-citrulline is bound by residues Tyr88 and Ser93. An ATP-binding site is contributed by Gly117. Residues Thr119, Asn123, and Asp124 each contribute to the L-aspartate site. L-citrulline is bound at residue Asn123. Residues Arg127 and Tyr273 each coordinate L-citrulline.

This sequence belongs to the argininosuccinate synthase family. Type 1 subfamily. Homotetramer.

Its subcellular location is the cytoplasm. The catalysed reaction is L-citrulline + L-aspartate + ATP = 2-(N(omega)-L-arginino)succinate + AMP + diphosphate + H(+). It participates in amino-acid biosynthesis; L-arginine biosynthesis; L-arginine from L-ornithine and carbamoyl phosphate: step 2/3. This is Argininosuccinate synthase from Xylella fastidiosa (strain Temecula1 / ATCC 700964).